We begin with the raw amino-acid sequence, 189 residues long: Lumazine protein (189 aa).

2 Lumazine-binding repeats span residues 1-96 (MFKG…LGKG) and 97-189 (ALTG…SNEW).

Requires 6,7-dimethyl-8-(1-D-ribityl)lumazine as cofactor.

In terms of biological role, antenna protein that modulates the color of the bioluminescence emission of the luciferase. In the presence of LumP, luciferase emission is shifted to higher energy values (shorter wavelength). The sequence is that of Lumazine protein (luxL) from Photobacterium phosphoreum.